A 390-amino-acid polypeptide reads, in one-letter code: Phosphopentomutase (390 aa).

Mn(2+) contacts are provided by Asp11, Asp283, His288, Asp324, His325, and His336.

It belongs to the phosphopentomutase family. The cofactor is Mn(2+).

It is found in the cytoplasm. The catalysed reaction is 2-deoxy-alpha-D-ribose 1-phosphate = 2-deoxy-D-ribose 5-phosphate. It carries out the reaction alpha-D-ribose 1-phosphate = D-ribose 5-phosphate. It functions in the pathway carbohydrate degradation; 2-deoxy-D-ribose 1-phosphate degradation; D-glyceraldehyde 3-phosphate and acetaldehyde from 2-deoxy-alpha-D-ribose 1-phosphate: step 1/2. Isomerase that catalyzes the conversion of deoxy-ribose 1-phosphate (dRib-1-P) and ribose 1-phosphate (Rib-1-P) to deoxy-ribose 5-phosphate (dRib-5-P) and ribose 5-phosphate (Rib-5-P), respectively. The protein is Phosphopentomutase of Clostridium novyi (strain NT).